The primary structure comprises 329 residues: GTP 3',8-cyclase (329 aa).

The Radical SAM core domain maps to 8–234; sequence AFARKFFYLR…QIRQRSDGPA (227 aa). Arginine 17 contacts GTP. Cysteine 24 and cysteine 28 together coordinate [4Fe-4S] cluster. Tyrosine 30 provides a ligand contact to S-adenosyl-L-methionine. Cysteine 31 serves as a coordination point for [4Fe-4S] cluster. Residue arginine 68 participates in GTP binding. S-adenosyl-L-methionine is bound at residue glycine 72. Threonine 99 is a binding site for GTP. Residue serine 123 participates in S-adenosyl-L-methionine binding. Lysine 160 is a GTP binding site. Residue methionine 194 coordinates S-adenosyl-L-methionine. Positions 257 and 260 each coordinate [4Fe-4S] cluster. Residue 262–264 participates in GTP binding; the sequence is RLR. Residue cysteine 274 participates in [4Fe-4S] cluster binding.

It belongs to the radical SAM superfamily. MoaA family. Monomer and homodimer. The cofactor is [4Fe-4S] cluster.

The enzyme catalyses GTP + AH2 + S-adenosyl-L-methionine = (8S)-3',8-cyclo-7,8-dihydroguanosine 5'-triphosphate + 5'-deoxyadenosine + L-methionine + A + H(+). It participates in cofactor biosynthesis; molybdopterin biosynthesis. Its function is as follows. Catalyzes the cyclization of GTP to (8S)-3',8-cyclo-7,8-dihydroguanosine 5'-triphosphate. The polypeptide is GTP 3',8-cyclase (Klebsiella pneumoniae (strain 342)).